The following is a 488-amino-acid chain: MNLEETMPLVFERSIPGRIGFSLPESDVPETNAGDYFDEAYLRSTPADLPELSELEIMRHYTNLSNHNFGVDSGFYPLGSCTMKYNPKINEKVARFPGFANIHPNQPESSVQGALELLYDLQTSLVEITGMDEVTLQPAAGAHGEWTGLMLIRAFHEKNGDTKRTKVIIPDSAHGTNPASAAVAGFDVVTVKSNEKGLVDVADLKKVVGEDTAALMLTNPNTLGLFEKDIVEMAEIVHAAGGKLYYDGANLNAIMAKVRPGDMGFDVVHLNLHKTFTGPHGGGGPGSGPIGVKKELIPFLPTPVLTKKDDAYTFDYNYPDSIGRVKPYYGNFGINVRAYTYIRTMGPDGLKLVTEYAVLNANYMMRKLQDAYDLPFDQVCKHEFVLSGNRQKKLGVRTVDIAKRLLDHNFHPPTVYFPLIVGEAIMIEPTETESKETLDSFIDTMLKIAKEAEENPEIVQEAPHSTYVKRLDETRAARKPVLRYQKEV.

Lys274 carries the N6-(pyridoxal phosphate)lysine modification.

It belongs to the GcvP family. C-terminal subunit subfamily. As to quaternary structure, the glycine cleavage system is composed of four proteins: P, T, L and H. In this organism, the P 'protein' is a heterodimer of two subunits. Requires pyridoxal 5'-phosphate as cofactor.

It catalyses the reaction N(6)-[(R)-lipoyl]-L-lysyl-[glycine-cleavage complex H protein] + glycine + H(+) = N(6)-[(R)-S(8)-aminomethyldihydrolipoyl]-L-lysyl-[glycine-cleavage complex H protein] + CO2. Functionally, the glycine cleavage system catalyzes the degradation of glycine. The P protein binds the alpha-amino group of glycine through its pyridoxal phosphate cofactor; CO(2) is released and the remaining methylamine moiety is then transferred to the lipoamide cofactor of the H protein. The protein is Probable glycine dehydrogenase (decarboxylating) subunit 2 of Listeria innocua serovar 6a (strain ATCC BAA-680 / CLIP 11262).